The primary structure comprises 127 residues: Large ribosomal subunit protein uL22 (127 aa).

This sequence belongs to the universal ribosomal protein uL22 family. In terms of assembly, part of the 50S ribosomal subunit.

Functionally, this protein binds specifically to 23S rRNA; its binding is stimulated by other ribosomal proteins, e.g. L4, L17, and L20. It is important during the early stages of 50S assembly. It makes multiple contacts with different domains of the 23S rRNA in the assembled 50S subunit and ribosome. The globular domain of the protein is located near the polypeptide exit tunnel on the outside of the subunit, while an extended beta-hairpin is found that lines the wall of the exit tunnel in the center of the 70S ribosome. This chain is Large ribosomal subunit protein uL22, found in Brucella suis (strain ATCC 23445 / NCTC 10510).